A 329-amino-acid chain; its full sequence is (+)-eremophilene synthase (329 aa).

Residues Asp-91 and Glu-96 each contribute to the Mg(2+) site. The DDXXD motif motif lies at 91-95 (DDAYD). A substrate-binding site is contributed by Arg-185. Mg(2+)-binding residues include Asn-231 and Ser-235. Residue Lys-238 coordinates substrate. Mg(2+) is bound at residue Glu-239. A substrate-binding site is contributed by 317–318 (RY).

The protein belongs to the terpene synthase family. Requires Mg(2+) as cofactor.

The enzyme catalyses (2E,6E)-farnesyl diphosphate = (+)-eremophilene + diphosphate. It functions in the pathway secondary metabolite biosynthesis; terpenoid biosynthesis. Catalyzes the conversion of (2E,6E)-farnesyl diphosphate (FPP) to yield the bicyclic sesquiterpene eremophilene via a 1,10-cyclization, which requires the abstraction of the pyrophosphate from FPP to yield the (E,E)-germacradienyl cation. The only accepted substrate is farnesyl diphosphate (FPP). This is (+)-eremophilene synthase from Sorangium cellulosum (strain So ce56) (Polyangium cellulosum (strain So ce56)).